Reading from the N-terminus, the 125-residue chain is Small ribosomal subunit protein uS13 (125 aa).

A disordered region spans residues 92-125 (RRHLPVHGQRTKTNARTRKGPKKTVAGKKKAGKK).

It belongs to the universal ribosomal protein uS13 family. As to quaternary structure, part of the 30S ribosomal subunit. Forms a loose heterodimer with protein S19. Forms two bridges to the 50S subunit in the 70S ribosome.

Its function is as follows. Located at the top of the head of the 30S subunit, it contacts several helices of the 16S rRNA. In the 70S ribosome it contacts the 23S rRNA (bridge B1a) and protein L5 of the 50S subunit (bridge B1b), connecting the 2 subunits; these bridges are implicated in subunit movement. Contacts the tRNAs in the A and P-sites. This is Small ribosomal subunit protein uS13 from Saccharopolyspora erythraea (strain ATCC 11635 / DSM 40517 / JCM 4748 / NBRC 13426 / NCIMB 8594 / NRRL 2338).